The sequence spans 202 residues: Na(+)-translocating NADH-quinone reductase subunit E (202 aa).

6 consecutive transmembrane segments (helical) span residues 11–31 (AVFI…FLAV), 39–59 (FGLG…NNLI), 81–101 (FLKF…LEMA), 114–134 (GIFL…AFMV), 144–164 (VVFG…LAAV), and 180–200 (LGIT…FSGV).

It belongs to the NqrDE/RnfAE family. In terms of assembly, composed of six subunits; NqrA, NqrB, NqrC, NqrD, NqrE and NqrF.

Its subcellular location is the cell inner membrane. It catalyses the reaction a ubiquinone + n Na(+)(in) + NADH + H(+) = a ubiquinol + n Na(+)(out) + NAD(+). Functionally, NQR complex catalyzes the reduction of ubiquinone-1 to ubiquinol by two successive reactions, coupled with the transport of Na(+) ions from the cytoplasm to the periplasm. NqrA to NqrE are probably involved in the second step, the conversion of ubisemiquinone to ubiquinol. The protein is Na(+)-translocating NADH-quinone reductase subunit E of Idiomarina loihiensis (strain ATCC BAA-735 / DSM 15497 / L2-TR).